The primary structure comprises 806 residues: mRNA 3'-end-processing protein RNA14 (806 aa).

The interval 1-187 is disordered; that stretch reads MSDDYDPTAV…SGPDNNKRKR (187 aa). Basic and acidic residues-rich tracts occupy residues 33–43 and 60–107; these read AAAKDPAHNEE and QGDE…KPEN. Acidic residues predominate over residues 108–118; sequence PSEEVAEDDDY. A compositionally biased stretch (gly residues) spans 132 to 142; sequence AGGGSVGGTGI. The span at 170–181 shows a compositional bias: low complexity; sequence SSTSNNNNSGPD. HAT repeat units lie at residues 221–253, 255–286, 299–334, 345–378, and 404–440; these read EKLDESRDIYERFLALYPLSAEIWIEYITLEMD, GEFKRLEQLFGRCLTRLPNLKLWNIYLTYVRR, EARTNIIKAFEFYLDHVGIDRESGNVWFEYLDFIKS, QKNDLTRKIYRKAIGIPLNNLSILWTAYTNFEYS, and VLENLMRGLDRSSVPKSGPRDEFQVRAWKKWIDWEKS. Positions 729-770 are disordered; it reads KPKSRTDEDSDSERPSKRARRTSHGNDQGDKMEPFNLPQKID. The span at 732 to 744 shows a compositional bias: basic and acidic residues; the sequence is SRTDEDSDSERPS.

The protein localises to the nucleus. It localises to the cytoplasm. Its function is as follows. Component of the cleavage factor IA (CFIA) complex, which is involved in the endonucleolytic cleavage during polyadenylation-dependent pre-mRNA 3'-end formation. The sequence is that of mRNA 3'-end-processing protein RNA14 (RNA14) from Yarrowia lipolytica (strain CLIB 122 / E 150) (Yeast).